A 319-amino-acid chain; its full sequence is Ribosomal RNA small subunit methyltransferase H (319 aa).

Residues 39-41, D59, F83, D104, and Q111 each bind S-adenosyl-L-methionine; that span reads GGH.

The protein belongs to the methyltransferase superfamily. RsmH family.

The protein resides in the cytoplasm. The enzyme catalyses cytidine(1402) in 16S rRNA + S-adenosyl-L-methionine = N(4)-methylcytidine(1402) in 16S rRNA + S-adenosyl-L-homocysteine + H(+). Specifically methylates the N4 position of cytidine in position 1402 (C1402) of 16S rRNA. In Ralstonia pickettii (strain 12D), this protein is Ribosomal RNA small subunit methyltransferase H.